The chain runs to 561 residues: DNA ligase B (561 aa).

Lys125 (N6-AMP-lysine intermediate) is an active-site residue.

The protein belongs to the NAD-dependent DNA ligase family. LigB subfamily.

It carries out the reaction NAD(+) + (deoxyribonucleotide)n-3'-hydroxyl + 5'-phospho-(deoxyribonucleotide)m = (deoxyribonucleotide)n+m + AMP + beta-nicotinamide D-nucleotide.. Catalyzes the formation of phosphodiester linkages between 5'-phosphoryl and 3'-hydroxyl groups in double-stranded DNA using NAD as a coenzyme and as the energy source for the reaction. The polypeptide is DNA ligase B (Salmonella gallinarum (strain 287/91 / NCTC 13346)).